Reading from the N-terminus, the 1323-residue chain is Regulatory protein ADR1 (1323 aa).

A Phosphoserine modification is found at serine 54. 2 consecutive C2H2-type zinc fingers follow at residues 104–126 and 132–155; these read FVCEVCTRAFARQEHLKRHYRSH and YPCGLCNRCFTRRDLLIRHAQKIH. The interval 175-216 is disordered; that stretch reads KARKNSASSVKFQTPTYGTPDNGNFLNRTTANTRRKASPEAN. Positions 179 to 206 are enriched in polar residues; the sequence is NSASSVKFQTPTYGTPDNGNFLNRTTAN. A phosphothreonine mark is found at threonine 188 and threonine 193. Position 230 is a phosphoserine; by PKA; in vitro (serine 230). Serine 258 carries the phosphoserine modification. At threonine 259 the chain carries Phosphothreonine. Phosphoserine occurs at positions 299, 323, and 325. Threonine 327 bears the Phosphothreonine mark.

In terms of processing, phosphorylation at Ser-230 by cAMP-dependent protein kinase A does not affect DNA binding but appears to prevent transcription of ADH2 during glucose repression.

The protein localises to the nucleus. Its function is as follows. Required for transcriptional activation of glucose-repressible alcohol dehydrogenase (ADH2). This is Regulatory protein ADR1 (ADR1) from Saccharomyces cerevisiae (strain ATCC 204508 / S288c) (Baker's yeast).